The following is a 251-amino-acid chain: MNLNSIPAFEDNYIWVLNDDEGKCLLVDPGEAEPVFRALEENQWQPVAILLTHHHHDHTGGVKALVARFPDITVYGPEETRSKGAQVVVNDGEKFNILGCEFLAFSTPGHTLGHFSYFSFPYLFCGDTMFSAGCGRLFEGTPAQMYQSFQKINALPEDTLICCAHEYTLSNLKFLVAILPDDPALTQYYREVNELRAKNQKTLPSILKNERQINLYLRLEDDDLIDKINPDLRLSTPEERFAWLRSKKDNF.

7 residues coordinate Zn(2+): His53, His55, Asp57, His58, His110, Asp127, and His165.

This sequence belongs to the metallo-beta-lactamase superfamily. Glyoxalase II family. In terms of assembly, monomer. Zn(2+) is required as a cofactor.

The catalysed reaction is an S-(2-hydroxyacyl)glutathione + H2O = a 2-hydroxy carboxylate + glutathione + H(+). It participates in secondary metabolite metabolism; methylglyoxal degradation; (R)-lactate from methylglyoxal: step 2/2. Thiolesterase that catalyzes the hydrolysis of S-D-lactoyl-glutathione to form glutathione and D-lactic acid. The sequence is that of Hydroxyacylglutathione hydrolase from Cronobacter sakazakii (strain ATCC BAA-894) (Enterobacter sakazakii).